The following is a 123-amino-acid chain: Small ribosomal subunit protein uS12c (123 aa).

This sequence belongs to the universal ribosomal protein uS12 family. As to quaternary structure, part of the 30S ribosomal subunit.

Its subcellular location is the plastid. The protein resides in the chloroplast. With S4 and S5 plays an important role in translational accuracy. Located at the interface of the 30S and 50S subunits. In Chlorella vulgaris (Green alga), this protein is Small ribosomal subunit protein uS12c (rps12).